Consider the following 843-residue polypeptide: Structure-specific endonuclease subunit SLX4 (843 aa).

5 disordered regions span residues Ser26–Thr111, Ala281–Lys313, Asn339–Pro377, Ser603–Leu655, and Ala729–Glu748. Composition is skewed to polar residues over residues Ala50 to Asn69 and Pro285 to Gln301. A compositionally biased stretch (basic residues) spans Gln302–Lys311. Polar residues-rich tracts occupy residues Asn349–Asn372 and Ser603–Thr616. Over residues Asp617–Pro636 the composition is skewed to basic and acidic residues. Residues Arg739–Glu748 show a composition bias toward low complexity.

The protein belongs to the SLX4 family. In terms of assembly, forms a heterodimer with SLX1. In terms of processing, phosphorylated in response to DNA damage.

The protein resides in the nucleus. In terms of biological role, regulatory subunit of the SLX1-SLX4 structure-specific endonuclease that resolves DNA secondary structures generated during DNA repair and recombination. Has endonuclease activity towards branched DNA substrates, introducing single-strand cuts in duplex DNA close to junctions with ss-DNA. This is Structure-specific endonuclease subunit SLX4 from Ajellomyces capsulatus (strain G186AR / H82 / ATCC MYA-2454 / RMSCC 2432) (Darling's disease fungus).